A 274-amino-acid polypeptide reads, in one-letter code: Pyrroline-5-carboxylate reductase 3 (274 aa).

N-acetylalanine is present on alanine 2.

It belongs to the pyrroline-5-carboxylate reductase family. In terms of assembly, homodecamer; composed of 5 homodimers.

It localises to the cytoplasm. The catalysed reaction is L-proline + NADP(+) = (S)-1-pyrroline-5-carboxylate + NADPH + 2 H(+). It carries out the reaction L-proline + NAD(+) = (S)-1-pyrroline-5-carboxylate + NADH + 2 H(+). The protein operates within amino-acid biosynthesis; L-proline biosynthesis; L-proline from L-glutamate 5-semialdehyde: step 1/1. In terms of biological role, oxidoreductase that catalyzes the last step in proline biosynthesis, which corresponds to the reduction of pyrroline-5-carboxylate (P5C) to L-proline using NAD(P)H. Proline is synthesized from either glutamate or ornithine; both are converted to P5C, and then to proline via pyrroline-5-carboxylate reductases (PYCRs). PYCR3 is exclusively linked to the biosynthesis of proline from ornithine. In Rattus norvegicus (Rat), this protein is Pyrroline-5-carboxylate reductase 3.